Consider the following 95-residue polypeptide: Co-chaperonin GroES (95 aa).

Belongs to the GroES chaperonin family. As to quaternary structure, heptamer of 7 subunits arranged in a ring. Interacts with the chaperonin GroEL.

Its subcellular location is the cytoplasm. In terms of biological role, together with the chaperonin GroEL, plays an essential role in assisting protein folding. The GroEL-GroES system forms a nano-cage that allows encapsulation of the non-native substrate proteins and provides a physical environment optimized to promote and accelerate protein folding. GroES binds to the apical surface of the GroEL ring, thereby capping the opening of the GroEL channel. This chain is Co-chaperonin GroES, found in Zymomonas mobilis subsp. mobilis (strain ATCC 31821 / ZM4 / CP4).